Consider the following 404-residue polypeptide: Cysteine desulfurase IscS (404 aa).

Residues alanine 75–threonine 76, asparagine 155, glutamine 183, and serine 203–histidine 205 contribute to the pyridoxal 5'-phosphate site. Lysine 206 is subject to N6-(pyridoxal phosphate)lysine. Pyridoxal 5'-phosphate is bound at residue threonine 243. The active-site Cysteine persulfide intermediate is cysteine 328. Cysteine 328 contacts [2Fe-2S] cluster.

The protein belongs to the class-V pyridoxal-phosphate-dependent aminotransferase family. NifS/IscS subfamily. Homodimer. Forms a heterotetramer with IscU, interacts with other sulfur acceptors. Pyridoxal 5'-phosphate serves as cofactor.

It localises to the cytoplasm. It catalyses the reaction (sulfur carrier)-H + L-cysteine = (sulfur carrier)-SH + L-alanine. The protein operates within cofactor biosynthesis; iron-sulfur cluster biosynthesis. Its function is as follows. Master enzyme that delivers sulfur to a number of partners involved in Fe-S cluster assembly, tRNA modification or cofactor biosynthesis. Catalyzes the removal of elemental sulfur atoms from cysteine to produce alanine. Functions as a sulfur delivery protein for Fe-S cluster synthesis onto IscU, an Fe-S scaffold assembly protein, as well as other S acceptor proteins. The polypeptide is Cysteine desulfurase IscS (Buchnera aphidicola subsp. Acyrthosiphon pisum (strain 5A)).